The primary structure comprises 764 residues: 5-methyltetrahydropteroyltriglutamate--homocysteine methyltransferase (764 aa).

5-methyltetrahydropteroyltri-L-glutamate-binding positions include Arg16 to Lys19 and Lys115. Residues Ile435 to Ser437 and Glu488 each bind L-homocysteine. L-methionine contacts are provided by residues Ile435 to Ser437 and Glu488. 5-methyltetrahydropteroyltri-L-glutamate is bound by residues Arg519–Cys520 and Trp565. Asp603 contacts L-homocysteine. Residue Asp603 coordinates L-methionine. A 5-methyltetrahydropteroyltri-L-glutamate-binding site is contributed by Glu609. 3 residues coordinate Zn(2+): His645, Cys647, and Glu669. Residue His698 is the Proton donor of the active site. Zn(2+) is bound at residue Cys730.

It belongs to the vitamin-B12 independent methionine synthase family. Zn(2+) serves as cofactor.

It carries out the reaction 5-methyltetrahydropteroyltri-L-glutamate + L-homocysteine = tetrahydropteroyltri-L-glutamate + L-methionine. It functions in the pathway amino-acid biosynthesis; L-methionine biosynthesis via de novo pathway; L-methionine from L-homocysteine (MetE route): step 1/1. In terms of biological role, catalyzes the transfer of a methyl group from 5-methyltetrahydrofolate to homocysteine resulting in methionine formation. The chain is 5-methyltetrahydropteroyltriglutamate--homocysteine methyltransferase from Burkholderia pseudomallei (strain K96243).